A 240-amino-acid chain; its full sequence is Aquaporin SIP1-1 (240 aa).

The next 2 helical transmembrane spans lie at 13 to 33 (LMTF…AAII) and 44 to 64 (APLV…TVIF). The short motif at 70 to 72 (NPT) is the NPA 1 element. 3 helical membrane-spanning segments follow: residues 89-109 (SLAI…LAIM), 132-152 (GAIA…LIIL), and 163-183 (FLLA…TGPA). The short motif at 185-187 (NPA) is the NPA 2 element. The chain crosses the membrane as a helical span at residues 203 to 223 (DHIYVYWISSFVGALSAALLF).

This sequence belongs to the MIP/aquaporin (TC 1.A.8) family. SIP (TC 1.A.8.10) subfamily. As to expression, expressed in roots and above ground. Expressed in elongating regions of the root tips, trichome cells of the rosette leaves, vascular tissues of the flower petals, stigma, stamens (anthers and filaments), pollen and the top and bottom (receptacle) of siliques.

It is found in the endoplasmic reticulum membrane. Water channel required to facilitate the transport of water across cell membrane. The protein is Aquaporin SIP1-1 (SIP1-1) of Arabidopsis thaliana (Mouse-ear cress).